The primary structure comprises 296 residues: Acetylglutamate kinase (296 aa).

Substrate-binding positions include 68–69 (GG), R90, and N193.

This sequence belongs to the acetylglutamate kinase family. ArgB subfamily.

The protein localises to the cytoplasm. The catalysed reaction is N-acetyl-L-glutamate + ATP = N-acetyl-L-glutamyl 5-phosphate + ADP. The protein operates within amino-acid biosynthesis; L-arginine biosynthesis; N(2)-acetyl-L-ornithine from L-glutamate: step 2/4. Its function is as follows. Catalyzes the ATP-dependent phosphorylation of N-acetyl-L-glutamate. In Acidothermus cellulolyticus (strain ATCC 43068 / DSM 8971 / 11B), this protein is Acetylglutamate kinase.